A 147-amino-acid chain; its full sequence is Putative cystatin-9-like protein CST9LP1 (147 aa).

The signal sequence occupies residues M1–A28. C98 and C108 form a disulfide bridge. 2 N-linked (GlcNAc...) asparagine glycosylation sites follow: N117 and N139. Residues C122 and C142 are joined by a disulfide bond.

Belongs to the cystatin family.

The protein resides in the secreted. This chain is Putative cystatin-9-like protein CST9LP1 (CST9LP1), found in Homo sapiens (Human).